Here is an 842-residue protein sequence, read N- to C-terminus: Leucine--tRNA ligase (842 aa).

The short motif at P62–H72 is the 'HIGH' region element. The interval G390–D414 is disordered. Residues A607–S611 carry the 'KMSKS' region motif. Residue K610 coordinates ATP.

This sequence belongs to the class-I aminoacyl-tRNA synthetase family.

The protein localises to the cytoplasm. The enzyme catalyses tRNA(Leu) + L-leucine + ATP = L-leucyl-tRNA(Leu) + AMP + diphosphate. In Paenarthrobacter aurescens (strain TC1), this protein is Leucine--tRNA ligase.